The sequence spans 198 residues: Pyridoxine/pyridoxamine 5'-phosphate oxidase 2 (198 aa).

FMN is bound by residues R42, 59 to 60 (NT), K66, and 121 to 122 (RS).

It belongs to the pyridoxamine 5'-phosphate oxidase family. As to quaternary structure, homodimer. FMN serves as cofactor.

The catalysed reaction is pyridoxamine 5'-phosphate + O2 + H2O = pyridoxal 5'-phosphate + H2O2 + NH4(+). It catalyses the reaction pyridoxine 5'-phosphate + O2 = pyridoxal 5'-phosphate + H2O2. The protein operates within cofactor metabolism; pyridoxal 5'-phosphate salvage; pyridoxal 5'-phosphate from pyridoxamine 5'-phosphate: step 1/1. It functions in the pathway cofactor metabolism; pyridoxal 5'-phosphate salvage; pyridoxal 5'-phosphate from pyridoxine 5'-phosphate: step 1/1. In terms of biological role, catalyzes the oxidation of either pyridoxine 5'-phosphate (PNP) or pyridoxamine 5'-phosphate (PMP) into pyridoxal 5'-phosphate (PLP). Has an in vitro catalytic efficiency for PNP approximately 300-fold lower than that of PPOX1. The polypeptide is Pyridoxine/pyridoxamine 5'-phosphate oxidase 2 (PPOX2) (Arabidopsis thaliana (Mouse-ear cress)).